We begin with the raw amino-acid sequence, 877 residues long: Alanine--tRNA ligase (877 aa).

Zn(2+) is bound by residues histidine 561, histidine 565, cysteine 669, and histidine 673.

This sequence belongs to the class-II aminoacyl-tRNA synthetase family. Requires Zn(2+) as cofactor.

Its subcellular location is the cytoplasm. The enzyme catalyses tRNA(Ala) + L-alanine + ATP = L-alanyl-tRNA(Ala) + AMP + diphosphate. Functionally, catalyzes the attachment of alanine to tRNA(Ala) in a two-step reaction: alanine is first activated by ATP to form Ala-AMP and then transferred to the acceptor end of tRNA(Ala). Also edits incorrectly charged Ser-tRNA(Ala) and Gly-tRNA(Ala) via its editing domain. The polypeptide is Alanine--tRNA ligase (Endomicrobium trichonymphae).